Here is a 299-residue protein sequence, read N- to C-terminus: ATP phosphoribosyltransferase (299 aa).

The protein belongs to the ATP phosphoribosyltransferase family. Long subfamily. Requires Mg(2+) as cofactor.

Its subcellular location is the cytoplasm. It catalyses the reaction 1-(5-phospho-beta-D-ribosyl)-ATP + diphosphate = 5-phospho-alpha-D-ribose 1-diphosphate + ATP. The protein operates within amino-acid biosynthesis; L-histidine biosynthesis; L-histidine from 5-phospho-alpha-D-ribose 1-diphosphate: step 1/9. With respect to regulation, feedback inhibited by histidine. Its function is as follows. Catalyzes the condensation of ATP and 5-phosphoribose 1-diphosphate to form N'-(5'-phosphoribosyl)-ATP (PR-ATP). Has a crucial role in the pathway because the rate of histidine biosynthesis seems to be controlled primarily by regulation of HisG enzymatic activity. The sequence is that of ATP phosphoribosyltransferase from Mannheimia succiniciproducens (strain KCTC 0769BP / MBEL55E).